Consider the following 360-residue polypeptide: Ferredoxin--NADP reductase (360 aa).

The FAD site is built by threonine 25, glutamate 44, glutamine 52, tyrosine 57, valine 97, phenylalanine 132, aspartate 298, and serine 339.

It belongs to the ferredoxin--NADP reductase type 2 family. As to quaternary structure, homodimer. The cofactor is FAD.

It catalyses the reaction 2 reduced [2Fe-2S]-[ferredoxin] + NADP(+) + H(+) = 2 oxidized [2Fe-2S]-[ferredoxin] + NADPH. The polypeptide is Ferredoxin--NADP reductase (Chlorobaculum tepidum (strain ATCC 49652 / DSM 12025 / NBRC 103806 / TLS) (Chlorobium tepidum)).